The primary structure comprises 712 residues: 1,4-alpha-glucan branching enzyme GlgB (712 aa).

D397 functions as the Nucleophile in the catalytic mechanism. The Proton donor role is filled by E450.

This sequence belongs to the glycosyl hydrolase 13 family. GlgB subfamily. In terms of assembly, monomer.

The enzyme catalyses Transfers a segment of a (1-&gt;4)-alpha-D-glucan chain to a primary hydroxy group in a similar glucan chain.. Its pathway is glycan biosynthesis; glycogen biosynthesis. In terms of biological role, catalyzes the formation of the alpha-1,6-glucosidic linkages in glycogen by scission of a 1,4-alpha-linked oligosaccharide from growing alpha-1,4-glucan chains and the subsequent attachment of the oligosaccharide to the alpha-1,6 position. In Bradyrhizobium sp. (strain ORS 278), this protein is 1,4-alpha-glucan branching enzyme GlgB.